A 330-amino-acid polypeptide reads, in one-letter code: Aspartate--ammonia ligase (330 aa).

The protein belongs to the class-II aminoacyl-tRNA synthetase family. AsnA subfamily.

It is found in the cytoplasm. The catalysed reaction is L-aspartate + NH4(+) + ATP = L-asparagine + AMP + diphosphate + H(+). It functions in the pathway amino-acid biosynthesis; L-asparagine biosynthesis; L-asparagine from L-aspartate (ammonia route): step 1/1. The protein is Aspartate--ammonia ligase of Haemophilus influenzae (strain PittEE).